Here is a 98-residue protein sequence, read N- to C-terminus: Cystatin-B (98 aa).

Methionine 1 is subject to N-acetylmethionine. The short motif at 46–50 (QIVAG) is the Secondary area of contact element.

This sequence belongs to the cystatin family. As to expression, widely expressed. Highest expression in heart, liver and kidney. Lower levels in brain, lung and skeletal muscle. Lowest levels in spleen and testis.

It localises to the cytoplasm. In terms of biological role, this is an intracellular thiol proteinase inhibitor. This is Cystatin-B (Cstb) from Mus musculus (Mouse).